A 61-amino-acid chain; its full sequence is Small ribosomal subunit protein uS14 (61 aa).

Zn(2+) is bound by residues C24, C27, C40, and C43.

The protein belongs to the universal ribosomal protein uS14 family. Zinc-binding uS14 subfamily. In terms of assembly, part of the 30S ribosomal subunit. Contacts proteins S3 and S10. Requires Zn(2+) as cofactor.

Its function is as follows. Binds 16S rRNA, required for the assembly of 30S particles and may also be responsible for determining the conformation of the 16S rRNA at the A site. The polypeptide is Small ribosomal subunit protein uS14 (Campylobacter curvus (strain 525.92)).